Reading from the N-terminus, the 393-residue chain is Protein TsgA (393 aa).

A run of 12 helical transmembrane segments spans residues 11 to 31, 51 to 71, 78 to 98, 101 to 121, 134 to 154, 162 to 182, 206 to 226, 245 to 265, 273 to 293, 297 to 317, 332 to 352, and 361 to 381; these read WISF…GMVM, FLNA…EIVP, FGFL…SLAL, AAMF…TFLV, LLFT…IAAF, WYWV…LTFG, IGVL…LGFI, TLVS…SFIL, ILTV…TGTP, AWSI…IITL, FVLT…GPIV, and LLTA…LGFV.

The protein belongs to the major facilitator superfamily. TsgA family.

It localises to the cell inner membrane. In Escherichia coli O6:K15:H31 (strain 536 / UPEC), this protein is Protein TsgA.